We begin with the raw amino-acid sequence, 306 residues long: Glutamyl-Q tRNA(Asp) synthetase (306 aa).

Residues 29-33 and aspartate 65 contribute to the L-glutamate site; that span reads RFAPS. Positions 32 to 42 match the 'HIGH' region motif; sequence PSPTGPLHLGN. The Zn(2+) site is built by cysteine 121, cysteine 123, tyrosine 141, and cysteine 145. Residues tyrosine 188 and arginine 206 each contribute to the L-glutamate site. The 'KMSKS' region signature appears at 244–248; the sequence is KLAKR. Position 247 (lysine 247) interacts with ATP.

This sequence belongs to the class-I aminoacyl-tRNA synthetase family. GluQ subfamily. It depends on Zn(2+) as a cofactor.

In terms of biological role, catalyzes the tRNA-independent activation of glutamate in presence of ATP and the subsequent transfer of glutamate onto a tRNA(Asp). Glutamate is transferred on the 2-amino-5-(4,5-dihydroxy-2-cyclopenten-1-yl) moiety of the queuosine in the wobble position of the QUC anticodon. In Prochlorococcus marinus (strain MIT 9303), this protein is Glutamyl-Q tRNA(Asp) synthetase.